Reading from the N-terminus, the 274-residue chain is Protein TIFY 11A (274 aa).

Disordered stretches follow at residues Ser49–Gly95 and Pro139–Asn176. Residues Ser92 to Gln127 form the Tify domain. Polar residues predominate over residues Pro139–Ser150. Residues Asp161 to Arg185 are a coiled coil. The short motif at Ile182–Gln206 is the Jas element. The short motif at Ala183–Arg190 is the Nuclear localization signal element. Residues Gln206 to Leu274 form a disordered region. Basic and acidic residues predominate over residues Ile249–Leu274.

Belongs to the TIFY/JAZ family. In terms of assembly, homo- and heterodimer. Interacts with MYC2, MYC3, MYC4, AFPH2/NINJA, TIFY10A/JAZ1, TIFY10B/JAZ2, TIFY11B/JAZ6, TIFY5A/JAZ8 and TIFY3B/JAZ12. As to quaternary structure, (Microbial infection) Interacts with the pathogenic Pseudomonas syringae HopZ1a protein. In terms of processing, (Microbial infection) Acetylated by Pseudomonas syringae HopZ1a. Post-translationally, ubiquitinated. Targeted for degradation by the SCF(COI1) E3 ubiquitin ligase-proteasome pathway during jasmonate signaling.

It localises to the nucleus. Repressor of jasmonate responses. This chain is Protein TIFY 11A, found in Arabidopsis thaliana (Mouse-ear cress).